The following is a 213-amino-acid chain: tRNA (guanine-N(7)-)-methyltransferase (213 aa).

S-adenosyl-L-methionine contacts are provided by Glu43, Asp68, Asn95, and Asn117. Substrate is bound by residues Asp153 and 190-193; that span reads TEYE.

The protein belongs to the class I-like SAM-binding methyltransferase superfamily. TrmB family.

The enzyme catalyses guanosine(46) in tRNA + S-adenosyl-L-methionine = N(7)-methylguanosine(46) in tRNA + S-adenosyl-L-homocysteine. It functions in the pathway tRNA modification; N(7)-methylguanine-tRNA biosynthesis. Functionally, catalyzes the formation of N(7)-methylguanine at position 46 (m7G46) in tRNA. The sequence is that of tRNA (guanine-N(7)-)-methyltransferase from Desulfitobacterium hafniense (strain DSM 10664 / DCB-2).